Reading from the N-terminus, the 272-residue chain is NH(3)-dependent NAD(+) synthetase (272 aa).

An ATP-binding site is contributed by 45-52; the sequence is GISGGQDS. D51 lines the Mg(2+) pocket. R138 is a binding site for deamido-NAD(+). Residue T158 coordinates ATP. E163 lines the Mg(2+) pocket. The deamido-NAD(+) site is built by K171 and D178. K187 and T209 together coordinate ATP. Residue 258 to 259 participates in deamido-NAD(+) binding; it reads HK.

Belongs to the NAD synthetase family. In terms of assembly, homodimer.

It carries out the reaction deamido-NAD(+) + NH4(+) + ATP = AMP + diphosphate + NAD(+) + H(+). It functions in the pathway cofactor biosynthesis; NAD(+) biosynthesis; NAD(+) from deamido-NAD(+) (ammonia route): step 1/1. In terms of biological role, catalyzes the ATP-dependent amidation of deamido-NAD to form NAD. Uses ammonia as a nitrogen source. This Bacillus cereus (strain G9842) protein is NH(3)-dependent NAD(+) synthetase.